Reading from the N-terminus, the 595-residue chain is MSLFRTYARVLTYLNKEKNASLLICSANVMLAIITIAEPILFGHVIDSIAEKSAIIPTLTIWVCFGISHILAYVLIARGADRLVHRRRLAVLTESFERIIAMPLIWHQQRGTSNALHILLRAVDSMATIWLDFMRQHLSTLVALFVLIPIAFNMNWRLSIVLVVLAIIYVLIARLVMRKTKDGQAAVECYHHNLFQHVSDSISNVSIVQSYNRIKEETSILHQHTNDLLKAQNPVLNWWALASGLNRMASTISIVCVLLLGAFFVAKGQLRVGEVVSFVGFAQLMISRLDQMSNFINLTISSQAKLQEFFAMEDSTFQSKEPENLPSLQNVKGAIQFHHVTYKFPNSSQGIFDISFEVKTGQTVAIVGPTGAGKTTLINLLQRIYDPTLGHISIDGINIRSVNRESLRKSLATVFQDAGLFNRTIHDNISIGRTTATNEELYEAAKIAAAHDFILKKTDRYNTMIGEQGSQLSGGEKQRLAIARAVLKNAPILILDEATSALDVETEARVKDALDCISHNRTTFIIAHRLSTVRNADLVLFLEQGHLIEKGSFQELIAKGGRFYKLLKAGSLAINQPTIETKDENVIPLHEAIAS.

The region spanning 21-301 (SLLICSANVM…MSNFINLTIS (281 aa)) is the ABC transmembrane type-1 domain. 5 consecutive transmembrane segments (helical) span residues 22 to 42 (LLICSANVMLAIITIAEPILF), 55 to 75 (IIPTLTIWVCFGISHILAYVL), 129 to 149 (IWLDFMRQHLSTLVALFVLIP), 152 to 172 (FNMNWRLSIVLVVLAIIYVLI), and 248 to 268 (MASTISIVCVLLLGAFFVAKG). The ABC transporter domain maps to 335–569 (IQFHHVTYKF…GGRFYKLLKA (235 aa)). Residue 368-375 (GPTGAGKT) coordinates ATP.

It belongs to the ABC transporter superfamily. Beta-(1--&gt;2)glucan exporter (TC 3.A.1.108.1) family. In terms of assembly, homodimer.

The protein localises to the cell inner membrane. It carries out the reaction [(1-&gt;2)-beta-D-glucosyl](n)(in) + ATP + H2O = [(1-&gt;2)-beta-D-glucosyl](n)(out) + ADP + phosphate + H(+). In terms of biological role, involved in beta-(1--&gt;2)glucan export. Transmembrane domains (TMD) form a pore in the inner membrane and the ATP-binding domain (NBD) is responsible for energy generation. The polypeptide is Beta-(1--&gt;2)glucan export ATP-binding/permease protein NdvA (Bartonella henselae (strain ATCC 49882 / DSM 28221 / CCUG 30454 / Houston 1) (Rochalimaea henselae)).